The sequence spans 118 residues: Holo-[acyl-carrier-protein] synthase (118 aa).

Positions 8 and 58 each coordinate Mg(2+).

This sequence belongs to the P-Pant transferase superfamily. AcpS family. It depends on Mg(2+) as a cofactor.

The protein resides in the cytoplasm. The enzyme catalyses apo-[ACP] + CoA = holo-[ACP] + adenosine 3',5'-bisphosphate + H(+). In terms of biological role, transfers the 4'-phosphopantetheine moiety from coenzyme A to a Ser of acyl-carrier-protein. This is Holo-[acyl-carrier-protein] synthase from Streptococcus pyogenes serotype M12 (strain MGAS2096).